Reading from the N-terminus, the 142-residue chain is Hemoglobin subunit alpha-1 (142 aa).

Positions 2–142 (VLSAADKSNV…VSTVLTSKYR (141 aa)) constitute a Globin domain. Residue His59 participates in O2 binding. His88 is a binding site for heme b.

Belongs to the globin family. In terms of assembly, heterotetramer of two alpha chains and two beta chains.

In terms of biological role, involved in oxygen transport from the lung to the various peripheral tissues. Functionally, hemopressin acts as an antagonist peptide of the cannabinoid receptor CNR1. Hemopressin-binding efficiently blocks cannabinoid receptor CNR1 and subsequent signaling. In Capra hircus (Goat), this protein is Hemoglobin subunit alpha-1 (HBA1).